The sequence spans 161 residues: MPTDLHPDLAALAPLLGTWTGRGSGKYPTIQPFDYLEEVTFSHVGKPFLAYAQKTRAAADGKPLHAETGYLRVPQPGRLELVLAHPSGITEIEVGSYAVTGGLIEMRMSTTSIGLTPSAKEVTALARWFRIDGDELSYSVQMGAVGQPLQDHLAAVLHRQR.

The short motif at 17-23 (GTWTGRG) is the GXWXGXG element. Residue His-152 participates in heme b binding.

The protein belongs to the nitrobindin family. In terms of assembly, homodimer. It depends on heme b as a cofactor.

The enzyme catalyses peroxynitrite = nitrate. It functions in the pathway nitrogen metabolism. Heme-binding protein able to scavenge peroxynitrite and to protect free L-tyrosine against peroxynitrite-mediated nitration, by acting as a peroxynitrite isomerase that converts peroxynitrite to nitrate. Therefore, this protein likely plays a role in peroxynitrite sensing and in the detoxification of reactive nitrogen and oxygen species (RNS and ROS, respectively). Is able to bind nitric oxide (NO) in vitro, but may act as a sensor of peroxynitrite levels in vivo. This chain is Peroxynitrite isomerase 1, found in Mycolicibacterium paratuberculosis (strain ATCC BAA-968 / K-10) (Mycobacterium paratuberculosis).